We begin with the raw amino-acid sequence, 182 residues long: Protein canopy homolog 2 (182 aa).

The first 20 residues, 1-20, serve as a signal peptide directing secretion; it reads MKGWGWLALLLGVLLGTAWA. A Saposin B-type domain is found at 24-175; that stretch reads QDLHCGACRA…KRTDLCDHAL (152 aa). Disulfide bonds link cysteine 28/cysteine 171, cysteine 31/cysteine 164, and cysteine 86/cysteine 137. Phosphoserine is present on serine 115. The Prevents secretion from ER signature appears at 179 to 182; that stretch reads HDEL.

It belongs to the canopy family. As to quaternary structure, interacts with MYLIP/MIR.

Its subcellular location is the endoplasmic reticulum. Its function is as follows. Positive regulator of neurite outgrowth by stabilizing myosin regulatory light chain (MRLC). It prevents MIR-mediated MRLC ubiquitination and its subsequent proteasomal degradation. This Mus musculus (Mouse) protein is Protein canopy homolog 2 (Cnpy2).